The chain runs to 627 residues: Altered inheritance of mitochondria protein 9, mitochondrial (627 aa).

The transit peptide at 1–43 (MIRYTVAGHSRRCVVGASKRVGAIKCITVAATKRFISNKPNEV) directs the protein to the mitochondrion.

The protein belongs to the AIM9 family.

Its subcellular location is the mitochondrion. The polypeptide is Altered inheritance of mitochondria protein 9, mitochondrial (AIM9) (Saccharomyces cerevisiae (strain YJM789) (Baker's yeast)).